A 905-amino-acid polypeptide reads, in one-letter code: Translation initiation factor IF-2 (905 aa).

The span at 50–62 (HYEAKGGEDKAAE) shows a compositional bias: basic and acidic residues. Positions 50 to 306 (HYEAKGGEDK…QKHEVGGVRL (257 aa)) are disordered. Low complexity predominate over residues 63–75 (KNAPAATPASASK). The segment covering 89–125 (GPKPSAAPKPGAAPKPGGAPKPGGAPKPGATPKPGGA) has biased composition (pro residues). A compositionally biased stretch (low complexity) spans 161 to 171 (PFSTGSSSDRP). The span at 233–276 (GSGGGGRGRGGRGGGPGHGGPGHGGFRGRGGRRGGTAGAFGRPG) shows a compositional bias: gly residues. The segment covering 280–290 (RRGKKSKRQKR) has biased composition (basic residues). Residues 291–302 (HEFEEQQKHEVG) are compositionally biased toward basic and acidic residues. Residues 401-575 (KRPPVVTVMG…LTADAALELT (175 aa)) form the tr-type G domain. Positions 410–417 (GHVDHGKT) are G1. Residue 410–417 (GHVDHGKT) coordinates GTP. Residues 435 to 439 (GITQG) are G2. Residues 460-463 (DTPG) form a G3 region. Residues 460–464 (DTPGH) and 514–517 (NKID) contribute to the GTP site. Positions 514-517 (NKID) are G4. The tract at residues 550–552 (SAK) is G5.

This sequence belongs to the TRAFAC class translation factor GTPase superfamily. Classic translation factor GTPase family. IF-2 subfamily.

The protein localises to the cytoplasm. Its function is as follows. One of the essential components for the initiation of protein synthesis. Protects formylmethionyl-tRNA from spontaneous hydrolysis and promotes its binding to the 30S ribosomal subunits. Also involved in the hydrolysis of GTP during the formation of the 70S ribosomal complex. The protein is Translation initiation factor IF-2 of Corynebacterium aurimucosum (strain ATCC 700975 / DSM 44827 / CIP 107346 / CN-1) (Corynebacterium nigricans).